Here is a 54-residue protein sequence, read N- to C-terminus: Protein YmjE (54 aa).

This is Protein YmjE from Escherichia coli (strain K12).